The primary structure comprises 439 residues: GTPase Obg (439 aa).

The region spanning 5–164 (TDFFDQATIV…LTLELELKML (160 aa)) is the Obg domain. The OBG-type G domain occupies 165–335 (ADVGLVGFPN…LLRRVADLLR (171 aa)). Residues 171 to 178 (GFPNAGKS), 196 to 200 (FTTLT), 217 to 220 (DIPG), 287 to 290 (NKAD), and 316 to 318 (SAA) contribute to the GTP site. Mg(2+)-binding residues include serine 178 and threonine 198. The OCT domain maps to 356 to 433 (LPEVDENAFT…IGRAELVWDD (78 aa)).

This sequence belongs to the TRAFAC class OBG-HflX-like GTPase superfamily. OBG GTPase family. As to quaternary structure, monomer. Requires Mg(2+) as cofactor.

Its subcellular location is the cytoplasm. An essential GTPase which binds GTP, GDP and possibly (p)ppGpp with moderate affinity, with high nucleotide exchange rates and a fairly low GTP hydrolysis rate. Plays a role in control of the cell cycle, stress response, ribosome biogenesis and in those bacteria that undergo differentiation, in morphogenesis control. In Chloroflexus aurantiacus (strain ATCC 29364 / DSM 637 / Y-400-fl), this protein is GTPase Obg.